Here is a 526-residue protein sequence, read N- to C-terminus: MIDLSTIAAQLNARTILPEGIVVITLLVVLVGDLILGRSSTKWTPYAAIVGLLGAIVALYTQWDSSNTIGFLGAFNADALSIAFRGIIAISAITTILMSVAYIEQTGTPLGEFICILLTATLGAMFLSGADELVMIFISLETLSISSYLLTGYTKRDPRSNEAALKYLLIGAASSAIFLYGISLLYGLSGGETRLTAIASSMANAGSANISLALVIALVFAIAGISFKISAVPFHQWTPDVYEGSPTPVVAFLSVGSKAAGFALAIRLLVTAFPLVSEQWHFVFTALAILSMVLGNVVALAQTSMKRLLAYSSIGQAGFVMIGLLANTEAGYASMIFYLLVYLFMNLGGFTCVILFSLRTGTDQISEYAGLYQKDPLLTLGLSLCLLSLGGIPPLAGFFGKIYLFWAGWQAGLYWLVLLGLITSVASIYYYIRVVKMMVVKEPQEMSDVIKNYPPISWKLPGMRPLQVGLILSVLATSLAGILSNPLFTLANSSIAKTPMLNSALVKTVEANSVASQLDFSLPSKN.

Transmembrane regions (helical) follow at residues Ile-16–Leu-36, Trp-43–Trp-63, Leu-80–Val-100, Leu-110–Ala-130, Leu-133–Tyr-153, Leu-168–Leu-188, Leu-212–Val-232, Pro-246–Ile-266, Trp-280–Leu-300, Leu-308–Thr-328, Ile-336–Phe-356, Leu-380–Gly-400, Ile-402–Ile-422, and Val-468–Phe-488.

It belongs to the complex I subunit 2 family. NDH-1 can be composed of about 15 different subunits; different subcomplexes with different compositions have been identified which probably have different functions.

The protein localises to the cellular thylakoid membrane. The catalysed reaction is a plastoquinone + NADH + (n+1) H(+)(in) = a plastoquinol + NAD(+) + n H(+)(out). The enzyme catalyses a plastoquinone + NADPH + (n+1) H(+)(in) = a plastoquinol + NADP(+) + n H(+)(out). NDH-1 shuttles electrons from an unknown electron donor, via FMN and iron-sulfur (Fe-S) centers, to quinones in the respiratory and/or the photosynthetic chain. The immediate electron acceptor for the enzyme in this species is believed to be plastoquinone. Couples the redox reaction to proton translocation, and thus conserves the redox energy in a proton gradient. Cyanobacterial NDH-1 also plays a role in inorganic carbon-concentration. The polypeptide is NAD(P)H-quinone oxidoreductase subunit 2 (Trichodesmium erythraeum (strain IMS101)).